Here is a 44-residue protein sequence, read N- to C-terminus: Conotoxin Cl9a (44 aa).

4-carboxyglutamate is present on residues glutamate 7, glutamate 8, and glutamate 24. Cystine bridges form between cysteine 9–cysteine 33, cysteine 15–cysteine 40, and cysteine 23–cysteine 42.

In terms of tissue distribution, expressed by the venom duct.

Its subcellular location is the secreted. This Californiconus californicus (California cone) protein is Conotoxin Cl9a.